Here is a 98-residue protein sequence, read N- to C-terminus: NADH-ubiquinone oxidoreductase chain 4L (98 aa).

3 consecutive transmembrane segments (helical) span residues 1–21 (MPLISTNILLAFITALLGVLI), 26–46 (LMSSLLCLEGMMLSMFILVSL), and 61–81 (LILLVFAACEAAVGLALLVMV).

It belongs to the complex I subunit 4L family. As to quaternary structure, core subunit of respiratory chain NADH dehydrogenase (Complex I) which is composed of 45 different subunits.

The protein resides in the mitochondrion inner membrane. The catalysed reaction is a ubiquinone + NADH + 5 H(+)(in) = a ubiquinol + NAD(+) + 4 H(+)(out). In terms of biological role, core subunit of the mitochondrial membrane respiratory chain NADH dehydrogenase (Complex I) which catalyzes electron transfer from NADH through the respiratory chain, using ubiquinone as an electron acceptor. Part of the enzyme membrane arm which is embedded in the lipid bilayer and involved in proton translocation. This Nycticebus coucang (Slow loris) protein is NADH-ubiquinone oxidoreductase chain 4L (MT-ND4L).